The sequence spans 310 residues: GPN-loop GTPase 2 (310 aa).

The residue at position 2 (alanine 2) is an N-acetylalanine. Position 19–24 (19–24 (GSGKTT)) interacts with GTP. The Gly-Pro-Asn (GPN)-loop; involved in dimer interface signature appears at 76–78 (GPN). 178-181 (SKMD) serves as a coordination point for GTP.

The protein belongs to the GPN-loop GTPase family. Heterodimers with GPN1 or GPN3. Binds to RNA polymerase II (RNAPII).

In terms of biological role, small GTPase required for proper localization of RNA polymerase II and III (RNAPII and RNAPIII). May act at an RNAP assembly step prior to nuclear import. The sequence is that of GPN-loop GTPase 2 from Mus musculus (Mouse).